Consider the following 265-residue polypeptide: Metal-activated transcriptional activator protein AMT1 (265 aa).

A DNA-binding region (copper-fist) is located at residues Met1–Pro40. Zn(2+) contacts are provided by Cys11, Cys14, Cys23, and His25. The interval Arg103–Ala129 is disordered. The span at Asn119–Pro128 shows a compositional bias: low complexity.

The protein resides in the nucleus. Functionally, trans-acting regulatory protein that activates transcription of the MT genes (metallothionein) in response to copper or silver ions. This chain is Metal-activated transcriptional activator protein AMT1 (AMT1), found in Candida glabrata (strain ATCC 2001 / BCRC 20586 / JCM 3761 / NBRC 0622 / NRRL Y-65 / CBS 138) (Yeast).